Consider the following 299-residue polypeptide: Diphthine methyl ester synthase 1 (299 aa).

Residues L9, D85, G88, 113–114 (SV), L164, L222, and H247 contribute to the S-adenosyl-L-methionine site.

This sequence belongs to the diphthine synthase family.

The protein localises to the cytoplasm. The catalysed reaction is 2-[(3S)-amino-3-carboxypropyl]-L-histidyl-[translation elongation factor 2] + 4 S-adenosyl-L-methionine = diphthine methyl ester-[translation elongation factor 2] + 4 S-adenosyl-L-homocysteine + 3 H(+). It participates in protein modification; peptidyl-diphthamide biosynthesis. Its function is as follows. S-adenosyl-L-methionine-dependent methyltransferase that catalyzes four methylations of the modified target histidine residue in translation elongation factor 2 (EF-2), to form an intermediate called diphthine methyl ester. The four successive methylation reactions represent the second step of diphthamide biosynthesis. The chain is Diphthine methyl ester synthase 1 (DPH5) from Candida albicans (strain SC5314 / ATCC MYA-2876) (Yeast).